A 495-amino-acid polypeptide reads, in one-letter code: Leucine aminopeptidase 2 (495 aa).

The first 21 residues, 1–21 (MKSQLLSLAVAVSTISQGVVG), serve as a signal peptide directing secretion. A PA domain is found at 124–218 (PPANKIMAEL…EDGKNLASLV (95 aa)). 2 N-linked (GlcNAc...) asparagine glycosylation sites follow: asparagine 142 and asparagine 235. Positions 259 and 271 each coordinate Zn(2+). Asparagine 272 is a glycosylation site (N-linked (GlcNAc...) asparagine). Catalysis depends on glutamate 303, which acts as the Proton acceptor. Residues glutamate 304 and aspartate 332 each contribute to the Zn(2+) site. A glycan (N-linked (GlcNAc...) asparagine) is linked at asparagine 352. Histidine 430 provides a ligand contact to Zn(2+).

The protein belongs to the peptidase M28 family. M28A subfamily. In terms of assembly, monomer. Zn(2+) is required as a cofactor.

The protein resides in the secreted. In terms of biological role, extracellular aminopeptidase that releases a wide variety of amino acids from natural peptides and contributes to pathogenicity. This Trichophyton tonsurans (Scalp ringworm fungus) protein is Leucine aminopeptidase 2 (LAP2).